Reading from the N-terminus, the 154-residue chain is SsrA-binding protein (154 aa).

Belongs to the SmpB family.

It localises to the cytoplasm. Its function is as follows. Required for rescue of stalled ribosomes mediated by trans-translation. Binds to transfer-messenger RNA (tmRNA), required for stable association of tmRNA with ribosomes. tmRNA and SmpB together mimic tRNA shape, replacing the anticodon stem-loop with SmpB. tmRNA is encoded by the ssrA gene; the 2 termini fold to resemble tRNA(Ala) and it encodes a 'tag peptide', a short internal open reading frame. During trans-translation Ala-aminoacylated tmRNA acts like a tRNA, entering the A-site of stalled ribosomes, displacing the stalled mRNA. The ribosome then switches to translate the ORF on the tmRNA; the nascent peptide is terminated with the 'tag peptide' encoded by the tmRNA and targeted for degradation. The ribosome is freed to recommence translation, which seems to be the essential function of trans-translation. The polypeptide is SsrA-binding protein (Enterococcus faecalis (strain ATCC 700802 / V583)).